The primary structure comprises 198 residues: CXXC-type zinc finger protein 4 (198 aa).

Residues 114 to 134 (NHSSSSSSSSGGAGGANPAKK) are disordered. The CXXC-type zinc finger occupies 132–173 (AKKKRKRCGVCVPCKRLINCGVCSSCRNRKTGHQICKFRKCE). Zn(2+) contacts are provided by Cys139, Cys142, Cys145, Cys151, Cys154, and Cys157. The tract at residues 161–166 (KTGHQI) is interaction with DVL1. Zn(2+) is bound by residues Cys167 and Cys172.

Interacts with the PDZ domain of DVL1.

It localises to the cytoplasm. Functionally, acts as a negative regulator of the Wnt signaling pathway via its interaction with DVL1. Binds preferentially to DNA containing cytidine-phosphate-guanosine (CpG) dinucleotides over CpH (H=A, T, and C), hemimethylated-CpG and hemimethylated-hydroxymethyl-CpG. The polypeptide is CXXC-type zinc finger protein 4 (CXXC4) (Homo sapiens (Human)).